Reading from the N-terminus, the 564-residue chain is Formate--tetrahydrofolate ligase (564 aa).

69–76 (TPAGEGKS) is an ATP binding site.

Belongs to the formate--tetrahydrofolate ligase family.

The catalysed reaction is (6S)-5,6,7,8-tetrahydrofolate + formate + ATP = (6R)-10-formyltetrahydrofolate + ADP + phosphate. It participates in one-carbon metabolism; tetrahydrofolate interconversion. The polypeptide is Formate--tetrahydrofolate ligase (Renibacterium salmoninarum (strain ATCC 33209 / DSM 20767 / JCM 11484 / NBRC 15589 / NCIMB 2235)).